Consider the following 314-residue polypeptide: Elongator complex protein 5 (314 aa).

The protein belongs to the ELP5 family. As to quaternary structure, component of the elongator complex.

It localises to the cytoplasm. Its subcellular location is the nucleus. Its pathway is tRNA modification; 5-methoxycarbonylmethyl-2-thiouridine-tRNA biosynthesis. Its function is as follows. Component of the elongator complex, a multiprotein complex which is required for multiple tRNA modifications, including mcm5U (5-methoxycarbonylmethyl uridine), mcm5s2U (5-methoxycarbonylmethyl-2-thiouridine), and ncm5U (5-carbamoylmethyl uridine). The elongator complex catalyzes formation of carboxymethyluridine in the wobble base at position 34 in tRNAs. The sequence is that of Elongator complex protein 5 (iki1) from Schizosaccharomyces pombe (strain 972 / ATCC 24843) (Fission yeast).